A 601-amino-acid polypeptide reads, in one-letter code: uncharacterized protein (601 aa).

The segment covering 24–35 has biased composition (basic residues); sequence RKSNVVLKKNKG. Disordered regions lie at residues 24 to 106 and 171 to 219; these read RKSN…LKLD and YGND…PREE. Polar residues predominate over residues 54-81; it reads SQFSSRDNFRTTQTQASSSSEPSDNTNR. The segment covering 92–106 has biased composition (basic and acidic residues); it reads TPKKEESNAEKLKLD. Residues serine 236 and serine 238 each carry the phosphoserine modification. The segment at 260 to 283 is disordered; the sequence is RKRKVLSSSSEDDESSSPEDLLKP.

The protein resides in the nucleus. This is an uncharacterized protein from Schizosaccharomyces pombe (strain 972 / ATCC 24843) (Fission yeast).